We begin with the raw amino-acid sequence, 260 residues long: Tryptophan synthase alpha chain (260 aa).

Residues E52 and D63 each act as proton acceptor in the active site.

The protein belongs to the TrpA family. As to quaternary structure, tetramer of two alpha and two beta chains.

The enzyme catalyses (1S,2R)-1-C-(indol-3-yl)glycerol 3-phosphate + L-serine = D-glyceraldehyde 3-phosphate + L-tryptophan + H2O. The protein operates within amino-acid biosynthesis; L-tryptophan biosynthesis; L-tryptophan from chorismate: step 5/5. In terms of biological role, the alpha subunit is responsible for the aldol cleavage of indoleglycerol phosphate to indole and glyceraldehyde 3-phosphate. The chain is Tryptophan synthase alpha chain from Streptococcus thermophilus (strain ATCC BAA-491 / LMD-9).